The chain runs to 453 residues: GTPase Der (453 aa).

EngA-type G domains are found at residues 4–169 (PIVA…PPTT) and 177–352 (IKIA…EEHK). GTP-binding positions include 10–17 (GRPNVGKS), 57–61 (DTGGL), 120–123 (NKCE), 183–190 (GRPNVGKS), 230–234 (DTAGI), and 295–298 (NKWD). Residues 353–438 (RRVSTSVINE…PIRLLWRSKK (86 aa)) form the KH-like domain.

The protein belongs to the TRAFAC class TrmE-Era-EngA-EngB-Septin-like GTPase superfamily. EngA (Der) GTPase family. Associates with the 50S ribosomal subunit.

Its function is as follows. GTPase that plays an essential role in the late steps of ribosome biogenesis. The sequence is that of GTPase Der from Trichormus variabilis (strain ATCC 29413 / PCC 7937) (Anabaena variabilis).